The following is a 324-amino-acid chain: Methionyl-tRNA formyltransferase (324 aa).

114-117 (SLLP) contacts (6S)-5,6,7,8-tetrahydrofolate.

The protein belongs to the Fmt family.

The catalysed reaction is L-methionyl-tRNA(fMet) + (6R)-10-formyltetrahydrofolate = N-formyl-L-methionyl-tRNA(fMet) + (6S)-5,6,7,8-tetrahydrofolate + H(+). Functionally, attaches a formyl group to the free amino group of methionyl-tRNA(fMet). The formyl group appears to play a dual role in the initiator identity of N-formylmethionyl-tRNA by promoting its recognition by IF2 and preventing the misappropriation of this tRNA by the elongation apparatus. The chain is Methionyl-tRNA formyltransferase from Phocaeicola vulgatus (strain ATCC 8482 / DSM 1447 / JCM 5826 / CCUG 4940 / NBRC 14291 / NCTC 11154) (Bacteroides vulgatus).